The sequence spans 269 residues: Ribosomal RNA small subunit methyltransferase A (269 aa).

5 residues coordinate S-adenosyl-L-methionine: I17, G42, E64, D89, and N109.

It belongs to the class I-like SAM-binding methyltransferase superfamily. rRNA adenine N(6)-methyltransferase family. RsmA subfamily.

Its subcellular location is the cytoplasm. It catalyses the reaction adenosine(1518)/adenosine(1519) in 16S rRNA + 4 S-adenosyl-L-methionine = N(6)-dimethyladenosine(1518)/N(6)-dimethyladenosine(1519) in 16S rRNA + 4 S-adenosyl-L-homocysteine + 4 H(+). In terms of biological role, specifically dimethylates two adjacent adenosines (A1518 and A1519) in the loop of a conserved hairpin near the 3'-end of 16S rRNA in the 30S particle. May play a critical role in biogenesis of 30S subunits. This chain is Ribosomal RNA small subunit methyltransferase A, found in Anaplasma phagocytophilum (strain HZ).